The primary structure comprises 264 residues: 3-methyl-2-oxobutanoate hydroxymethyltransferase (264 aa).

Mg(2+) contacts are provided by Asp45 and Asp84. 3-methyl-2-oxobutanoate contacts are provided by residues 45 to 46 (DS), Asp84, and Lys112. Residue Glu114 coordinates Mg(2+). The Proton acceptor role is filled by Glu181.

This sequence belongs to the PanB family. Homodecamer; pentamer of dimers. The cofactor is Mg(2+).

Its subcellular location is the cytoplasm. It catalyses the reaction 3-methyl-2-oxobutanoate + (6R)-5,10-methylene-5,6,7,8-tetrahydrofolate + H2O = 2-dehydropantoate + (6S)-5,6,7,8-tetrahydrofolate. Its pathway is cofactor biosynthesis; (R)-pantothenate biosynthesis; (R)-pantoate from 3-methyl-2-oxobutanoate: step 1/2. Functionally, catalyzes the reversible reaction in which hydroxymethyl group from 5,10-methylenetetrahydrofolate is transferred onto alpha-ketoisovalerate to form ketopantoate. This is 3-methyl-2-oxobutanoate hydroxymethyltransferase from Shewanella loihica (strain ATCC BAA-1088 / PV-4).